Consider the following 245-residue polypeptide: MSFTAVPLTLYPDMFPGPLGHSMAGRALESGTWNCAPVQIRDFATDRHRTVDDTPAGGGAGMVLKADVLAGAIDHAMKAHPGLPVLAMTPRGTPITQARVRELAAGPGAIILCGRFEGFDERIFDARPIEQVSMGDIILSGGEMAALLLLDACIRLLPGVMGAASSGDDESFENGLLEYPHYTRPVTWEGRTIPEVLRSGDHAKIAAWRKQQAEEATRLRRPDLWERHIDARARPASGARRKEED.

G114 is a binding site for S-adenosyl-L-methionine.

This sequence belongs to the RNA methyltransferase TrmD family. As to quaternary structure, homodimer.

The protein resides in the cytoplasm. It catalyses the reaction guanosine(37) in tRNA + S-adenosyl-L-methionine = N(1)-methylguanosine(37) in tRNA + S-adenosyl-L-homocysteine + H(+). Functionally, specifically methylates guanosine-37 in various tRNAs. The chain is tRNA (guanine-N(1)-)-methyltransferase from Sphingopyxis alaskensis (strain DSM 13593 / LMG 18877 / RB2256) (Sphingomonas alaskensis).